Here is a 182-residue protein sequence, read N- to C-terminus: ADP-ribosylation factor 1 (182 aa).

A lipid anchor (N-myristoyl glycine) is attached at G2. The segment at 3 to 16 is important for the stable binding to the membranes; sequence NVFANLFKGLFGKK. Residues 24–32, 126–129, and A160 each bind GTP; these read GLDAAGKTT and NKQD.

It belongs to the small GTPase superfamily. Arf family.

It localises to the golgi apparatus membrane. It is found in the cytoplasm. Its subcellular location is the cytosol. It carries out the reaction GTP + H2O = GDP + phosphate + H(+). With respect to regulation, alternates between an inactive GDP-bound form and an active GTP-bound form. Activated by a guanine nucleotide-exchange factor (GEF) and inactivated by GTPase-activating protein (GAP). In terms of biological role, small GTPase involved in protein trafficking between different compartments. Modulates vesicle budding and uncoating within the Golgi complex. In its GTP-bound form, triggers the recruitment of coatomer proteins to the Golgi membrane. The hydrolysis of ARF1-bound GTP, which is mediated by ARFGAPs proteins, is required for dissociation of coat proteins from Golgi membranes and vesicles. Has a role in eye development. Required for cleavage furrow ingression in embryonic cells. This Drosophila melanogaster (Fruit fly) protein is ADP-ribosylation factor 1.